A 195-amino-acid chain; its full sequence is Cytochrome c oxidase subunit 1 (195 aa).

Residues 12–32 form a helical membrane-spanning segment; sequence MYWVLGFIFLFTLGGLTGIVL. Residues histidine 42 and aspartate 43 each coordinate Mg(2+). Histidine 50 contributes to the heme a3 binding site. Histidine 52 is a Fe(II)-heme a binding site. The next 3 helical transmembrane spans lie at 59 to 79, 88 to 108, and 131 to 151; these read AVFA…GLVL, FIVM…LGLA, and GSLM…EAFL.

The protein belongs to the heme-copper respiratory oxidase family. In terms of assembly, component of the cytochrome c oxidase (complex IV, CIV), a multisubunit enzyme composed of a catalytic core of 3 subunits and several supernumerary subunits. The complex exists as a monomer or a dimer and forms supercomplexes (SCs) in the inner mitochondrial membrane with ubiquinol-cytochrome c oxidoreductase (cytochrome b-c1 complex, complex III, CIII). Requires heme as cofactor. It depends on Cu cation as a cofactor.

It is found in the mitochondrion inner membrane. It carries out the reaction 4 Fe(II)-[cytochrome c] + O2 + 8 H(+)(in) = 4 Fe(III)-[cytochrome c] + 2 H2O + 4 H(+)(out). The protein operates within energy metabolism; oxidative phosphorylation. In terms of biological role, component of the cytochrome c oxidase, the last enzyme in the mitochondrial electron transport chain which drives oxidative phosphorylation. The respiratory chain contains 3 multisubunit complexes succinate dehydrogenase (complex II, CII), ubiquinol-cytochrome c oxidoreductase (cytochrome b-c1 complex, complex III, CIII) and cytochrome c oxidase (complex IV, CIV), that cooperate to transfer electrons derived from NADH and succinate to molecular oxygen, creating an electrochemical gradient over the inner membrane that drives transmembrane transport and the ATP synthase. Cytochrome c oxidase is the component of the respiratory chain that catalyzes the reduction of oxygen to water. Electrons originating from reduced cytochrome c in the intermembrane space (IMS) are transferred via the dinuclear copper A center (CU(A)) of subunit 2 and heme A of subunit 1 to the active site in subunit 1, a binuclear center (BNC) formed by heme A3 and copper B (CU(B)). The BNC reduces molecular oxygen to 2 water molecules using 4 electrons from cytochrome c in the IMS and 4 protons from the mitochondrial matrix. The polypeptide is Cytochrome c oxidase subunit 1 (COI) (Albinaria turrita (Door snail)).